A 506-amino-acid polypeptide reads, in one-letter code: BTB/POZ domain-containing protein At3g22104 (506 aa).

The BTB domain occupies 6–76; the sequence is SDLEVDINGE…CYNDGRVAVM (71 aa). Positions 187–435 constitute an NPH3 domain; it reads TWWFDEVLVL…LDEQQQQQQQ (249 aa). The stretch at 421 to 492 forms a coiled coil; the sequence is QAIETLDEQQ…MEVIKKRSKS (72 aa). Residues 485–506 form a disordered region; it reads VIKKRSKSSSKGSNRSLPKLCS.

This sequence belongs to the NPH3 family.

It functions in the pathway protein modification; protein ubiquitination. May act as a substrate-specific adapter of an E3 ubiquitin-protein ligase complex (CUL3-RBX1-BTB) which mediates the ubiquitination and subsequent proteasomal degradation of target proteins. In Arabidopsis thaliana (Mouse-ear cress), this protein is BTB/POZ domain-containing protein At3g22104.